A 471-amino-acid chain; its full sequence is tRNA(Ile)-lysidine synthase (471 aa).

35–40 provides a ligand contact to ATP; that stretch reads SGGADS.

It belongs to the tRNA(Ile)-lysidine synthase family.

The protein resides in the cytoplasm. The catalysed reaction is cytidine(34) in tRNA(Ile2) + L-lysine + ATP = lysidine(34) in tRNA(Ile2) + AMP + diphosphate + H(+). In terms of biological role, ligates lysine onto the cytidine present at position 34 of the AUA codon-specific tRNA(Ile) that contains the anticodon CAU, in an ATP-dependent manner. Cytidine is converted to lysidine, thus changing the amino acid specificity of the tRNA from methionine to isoleucine. This Geobacter sulfurreducens (strain ATCC 51573 / DSM 12127 / PCA) protein is tRNA(Ile)-lysidine synthase.